Here is a 376-residue protein sequence, read N- to C-terminus: Endo-1,4-beta-xylanase A (376 aa).

An N-terminal signal peptide occupies residues 1-18; the sequence is MHLASSLFLLATLPFGFA. Residues 55-355 form the GH10 domain; that stretch reads QRERAGLEDK…HPAYYGVVEA (301 aa). Asparagine 100 is a glycosylation site (N-linked (GlcNAc...) asparagine). Glutamate 170 functions as the Proton donor in the catalytic mechanism. The active-site Nucleophile is glutamate 277. N-linked (GlcNAc...) asparagine glycosylation is present at asparagine 358.

The protein belongs to the glycosyl hydrolase 10 (cellulase F) family.

It localises to the secreted. It catalyses the reaction Endohydrolysis of (1-&gt;4)-beta-D-xylosidic linkages in xylans.. It functions in the pathway glycan degradation; xylan degradation. Its activity is regulated as follows. Partial inhibition of activity is detected in the presence of Ag(+), Cu2(+) and SDS. Like most fungal xylanases, activity is completely inhibited by Hg(2+) since Hg(2+) could interact with tryptophan residues and oxidize the indole ring. Beta-mercaptoethanol enhances the enzymatic activity by counteracting the oxidation effects of the S-S linkage between cysteine residues. Endo-1,4-beta-xylanase involved in the hydrolysis of xylan, a major structural heterogeneous polysaccharide found in plant biomass representing the second most abundant polysaccharide in the biosphere, after cellulose. Is most active on birchwood xylan (defined as 100%), moderate on beechwood xylan (96.8%) and soluble wheat arabinoxylan (84.5%), and weak on insoluble wheat arabinoxylan (19.7%). Hydrolyzes substrates into a mixture of xylobiose and xylotriose, but no xylose. No activity was detected in the presence of barley beta-glucan, carboxymethyl cellulose-sodium (CMC-Na), and Avicel. Acts as an alkali-tolerant xylanase, exhibiting 68.8% of the activity at pH 9.0, and even 31.8% at pH 10.0. This chain is Endo-1,4-beta-xylanase A, found in Humicola insolens (Soft-rot fungus).